A 270-amino-acid polypeptide reads, in one-letter code: Insulin-like growth factor-binding protein-like 1 (270 aa).

A signal peptide spans 1-17 (MPRLPLLLLLLPSLARG). Residues 26–101 (RHPECSPCQQ…PEGTGLCVCA (76 aa)) form the IGFBP N-terminal domain. 7 disulfide bridges follow: C30–C55, C33–C57, C38–C58, C44–C61, C69–C83, C77–C98, and C107–C143. The 59-residue stretch at 87–145 (ASGTAPEGTGLCVCAQRGAVCGSDGRSYSSICALRLRARHAPRAHHGHLHKARDGPCEF) folds into the Kazal-like domain. An Ig-like C2-type domain is found at 147–251 (PVVLMPPRDI…GEAQSHGTVT (105 aa)). An N-linked (GlcNAc...) asparagine glycan is attached at N158. A disulfide bridge connects residues C168 and C235.

The protein resides in the secreted. Its function is as follows. IGF-binding proteins prolong the half-life of IGFs and have been shown to either inhibit or stimulate the growth promoting effects of the IGFs in cell culture. They alter the interaction of IGFs with their cell surface receptors. The polypeptide is Insulin-like growth factor-binding protein-like 1 (Igfbpl1) (Mus musculus (Mouse)).